The sequence spans 402 residues: Type II NADH:quinone oxidoreductase (402 aa).

FAD contacts are provided by residues 12–16 (GAGYA), 39–40 (NK), and valine 83. The active site involves glutamate 172. Residues aspartate 302, 319–320 (AQ), and lysine 379 contribute to the FAD site.

The protein belongs to the NADH dehydrogenase family. The cofactor is FAD.

The protein resides in the cell membrane. The enzyme catalyses a quinone + NADH + H(+) = a quinol + NAD(+). Alternative, nonproton pumping NADH:quinone oxidoreductase that delivers electrons to the respiratory chain by oxidation of NADH and reduction of quinones, and contributes to the regeneration of NAD(+). This chain is Type II NADH:quinone oxidoreductase, found in Staphylococcus saprophyticus subsp. saprophyticus (strain ATCC 15305 / DSM 20229 / NCIMB 8711 / NCTC 7292 / S-41).